Here is a 361-residue protein sequence, read N- to C-terminus: Peptide chain release factor 1 (361 aa).

Gln237 carries the post-translational modification N5-methylglutamine. The segment covering 285–296 has biased composition (basic and acidic residues); sequence DEKRRSAEESTR. The interval 285–305 is disordered; it reads DEKRRSAEESTRRNLVSSGDR.

This sequence belongs to the prokaryotic/mitochondrial release factor family. Post-translationally, methylated by PrmC. Methylation increases the termination efficiency of RF1.

Its subcellular location is the cytoplasm. Peptide chain release factor 1 directs the termination of translation in response to the peptide chain termination codons UAG and UAA. The protein is Peptide chain release factor 1 of Shewanella halifaxensis (strain HAW-EB4).